A 304-amino-acid chain; its full sequence is Acetyl-coenzyme A carboxylase carboxyl transferase subunit beta (304 aa).

A CoA carboxyltransferase N-terminal domain is found at Leu29–Ser298. Residues Cys33, Cys36, Cys52, and Cys55 each contribute to the Zn(2+) site. A C4-type zinc finger spans residues Cys33–Cys55.

This sequence belongs to the AccD/PCCB family. In terms of assembly, acetyl-CoA carboxylase is a heterohexamer composed of biotin carboxyl carrier protein (AccB), biotin carboxylase (AccC) and two subunits each of ACCase subunit alpha (AccA) and ACCase subunit beta (AccD). The cofactor is Zn(2+).

It is found in the cytoplasm. It catalyses the reaction N(6)-carboxybiotinyl-L-lysyl-[protein] + acetyl-CoA = N(6)-biotinyl-L-lysyl-[protein] + malonyl-CoA. It participates in lipid metabolism; malonyl-CoA biosynthesis; malonyl-CoA from acetyl-CoA: step 1/1. Component of the acetyl coenzyme A carboxylase (ACC) complex. Biotin carboxylase (BC) catalyzes the carboxylation of biotin on its carrier protein (BCCP) and then the CO(2) group is transferred by the transcarboxylase to acetyl-CoA to form malonyl-CoA. In Gloeobacter violaceus (strain ATCC 29082 / PCC 7421), this protein is Acetyl-coenzyme A carboxylase carboxyl transferase subunit beta.